The primary structure comprises 314 residues: Serine protease 46 (314 aa).

One can recognise a Peptidase S1 domain in the interval valine 44 to glycine 281. Cysteine 69 and cysteine 85 are oxidised to a cystine. Residues histidine 84 and aspartate 130 each act as charge relay system in the active site. Intrachain disulfides connect cysteine 164–cysteine 239, cysteine 197–cysteine 219, and cysteine 229–cysteine 257. Serine 233 functions as the Charge relay system in the catalytic mechanism. A helical transmembrane segment spans residues phenylalanine 293–leucine 313.

This sequence belongs to the peptidase S1 family.

The protein resides in the membrane. This chain is Serine protease 46 (Prss46), found in Rattus norvegicus (Rat).